Here is a 219-residue protein sequence, read N- to C-terminus: PKHD-type hydroxylase SYNPCC7002_A2658 (219 aa).

One can recognise a Fe2OG dioxygenase domain in the interval 78–172; the sequence is TVHTLLFSRY…RLVAVGWVQS (95 aa). Fe cation contacts are provided by H96, D98, and H153. Position 163 (R163) interacts with 2-oxoglutarate.

Fe(2+) serves as cofactor. L-ascorbate is required as a cofactor.

The polypeptide is PKHD-type hydroxylase SYNPCC7002_A2658 (Picosynechococcus sp. (strain ATCC 27264 / PCC 7002 / PR-6) (Agmenellum quadruplicatum)).